The sequence spans 133 residues: Large ribosomal subunit protein bL20 (133 aa).

Belongs to the bacterial ribosomal protein bL20 family.

Binds directly to 23S ribosomal RNA and is necessary for the in vitro assembly process of the 50S ribosomal subunit. It is not involved in the protein synthesizing functions of that subunit. In Bartonella tribocorum (strain CIP 105476 / IBS 506), this protein is Large ribosomal subunit protein bL20.